The sequence spans 286 residues: 2-dehydro-3-deoxyphosphooctonate aldolase (286 aa).

This sequence belongs to the KdsA family.

The protein resides in the cytoplasm. It carries out the reaction D-arabinose 5-phosphate + phosphoenolpyruvate + H2O = 3-deoxy-alpha-D-manno-2-octulosonate-8-phosphate + phosphate. The protein operates within carbohydrate biosynthesis; 3-deoxy-D-manno-octulosonate biosynthesis; 3-deoxy-D-manno-octulosonate from D-ribulose 5-phosphate: step 2/3. Its pathway is bacterial outer membrane biogenesis; lipopolysaccharide biosynthesis. This is 2-dehydro-3-deoxyphosphooctonate aldolase from Bradyrhizobium sp. (strain BTAi1 / ATCC BAA-1182).